Consider the following 82-residue polypeptide: Omega-conotoxin-like 9 (82 aa).

The N-terminal stretch at 1–22 (MKLTCMMIAAVLFLTTWTFVTA) is a signal peptide. Positions 23–51 (DDSRYGLKNLFPKARHEMKNPEASKLNKR) are excised as a propeptide. Cystine bridges form between Cys54–Cys69, Cys61–Cys73, and Cys68–Cys77.

Belongs to the conotoxin O1 superfamily. In terms of tissue distribution, expressed by the venom duct.

Its subcellular location is the secreted. Its function is as follows. Omega-conotoxins act at presynaptic membranes, they bind and block voltage-gated calcium channels (Cav). The sequence is that of Omega-conotoxin-like 9 from Conus striatus (Striated cone).